The chain runs to 980 residues: Peroxisomal ATPase PEX6 (980 aa).

At R119 the chain carries Omega-N-methylarginine. ATP contacts are provided by residues 470-477 (GPPGCGKT) and 744-751 (GPPGTGKT).

Belongs to the AAA ATPase family. In terms of assembly, interacts with PEX1; forming the PEX1-PEX6 AAA ATPase complex, which is composed of a heterohexamer formed by a trimer of PEX1-PEX6 dimers. Interacts with PEX26; interaction is direct and promotes recruitment to peroxisomal membranes. Interacts with ZFAND6. As to expression, expressed in the retina, at higher levels in the photoreceptor layer at the joint between the outer and inner segments.

Its subcellular location is the cytoplasm. It localises to the cytosol. It is found in the peroxisome membrane. The protein resides in the cell projection. The protein localises to the cilium. Its subcellular location is the photoreceptor outer segment. It catalyses the reaction ATP + H2O = ADP + phosphate + H(+). Component of the PEX1-PEX6 AAA ATPase complex, a protein dislocase complex that mediates the ATP-dependent extraction of the PEX5 receptor from peroxisomal membranes, an essential step for PEX5 recycling. Specifically recognizes PEX5 monoubiquitinated at 'Cys-11', and pulls it out of the peroxisome lumen through the PEX2-PEX10-PEX12 retrotranslocation channel. Extraction by the PEX1-PEX6 AAA ATPase complex is accompanied by unfolding of the TPR repeats and release of bound cargo from PEX5. This chain is Peroxisomal ATPase PEX6, found in Homo sapiens (Human).